We begin with the raw amino-acid sequence, 429 residues long: MPLCRPEHLMPRASRVPVAASLPLSHAVIPTQLPSRPGHRPPGRPRRCPKASCLPPPVGPSSTQTAKRVTMGWPRPGRALVAVKALLVLSLLQVPAQAVVRAVLEDNSSSVDFADLPALFGVPLAPEGIRGYLMEVKPANACHPIEAPRLGNRSLGAIVLIRRYDCTFDLKVLNAQRAGFEAAIVHNVHSDDLVSMTHVYEDLRGQIAIPSVFVSEAASQDLRVILGCNKSAHALLLPDDPPCHDLGCHPVLTVSWVLGCTLALVVSAFFVLNHLWLWAQACCSHRRPVKTSTCQKAQVRTFTWHNDLCAICLDEYEEGDQLKILPCSHTYHCKCIDPWFSQAPRRSCPVCKQSVAATEDSFDSTTYSFRDEDPSLPGHRPPIWAIQVQLRSRRLELLGRASPHCHCSTTSLEAEYTTVSSAPPEAPGQ.

Residues 1-27 (MPLCRPEHLMPRASRVPVAASLPLSHA) form the signal peptide. Residues 28-250 (VIPTQLPSRP…PPCHDLGCHP (223 aa)) lie on the Lumenal side of the membrane. The interval 30-67 (PTQLPSRPGHRPPGRPRRCPKASCLPPPVGPSSTQTAK) is disordered. A compositionally biased stretch (basic residues) spans 37–49 (PGHRPPGRPRRCP). Residues Asn-107, Asn-152, and Asn-229 are each glycosylated (N-linked (GlcNAc...) asparagine). A PA domain is found at 151-223 (GNRSLGAIVL…VSEAASQDLR (73 aa)). A helical membrane pass occupies residues 251-271 (VLTVSWVLGCTLALVVSAFFV). Residues 272–429 (LNHLWLWAQA…SSAPPEAPGQ (158 aa)) are Cytoplasmic-facing. The RING-type; atypical zinc-finger motif lies at 309–352 (CAICLDEYEEGDQLKILPCSHTYHCKCIDPWFSQAPRRSCPVCK).

As to quaternary structure, interacts with CANX.

The protein resides in the endoplasmic reticulum membrane. It catalyses the reaction S-ubiquitinyl-[E2 ubiquitin-conjugating enzyme]-L-cysteine + [acceptor protein]-L-lysine = [E2 ubiquitin-conjugating enzyme]-L-cysteine + N(6)-ubiquitinyl-[acceptor protein]-L-lysine.. It participates in protein modification; protein ubiquitination. In terms of biological role, E3 ubiquitin-protein ligase that acts as a negative regulator of NOD2 signaling by mediating ubiquitination and degradation of RIPK2. Also catalyzes ubiquitination and proteasomal degradation of CANX within the endoplasmic reticulum. Could have a role in spermatogenesis. The sequence is that of E3 ubiquitin-protein ligase ZNRF4 from Homo sapiens (Human).